The chain runs to 309 residues: Ankyrin repeat and SOCS box protein 12 (309 aa).

5 ANK repeats span residues 63–92, 96–125, 129–158, 171–200, and 213–243; these read VPGTPLRLAASYGHLSCLQVLLAHGADVDS, KAQTPLFTAVSHGHLDCVRVLLEAGASPGG, NNCSPVLTAARDGAVAILQELLDHGAEANV, SCSGPLYLAAVYGHLDCFRLLLLHGADPDY, and RPRTLLEICLHHNCEPEYIQLLIDFGANIYL. The SOCS box domain maps to 268 to 308; sequence PRSLLSQVRLVVRRALCQAGQPQAINQLDIPPMLISYLKHQ.

This sequence belongs to the ankyrin SOCS box (ASB) family. In terms of assembly, interacts with CUL5 and RNF7.

The protein operates within protein modification; protein ubiquitination. Probable substrate-recognition component of a SCF-like ECS (Elongin-Cullin-SOCS-box protein) E3 ubiquitin-protein ligase complex which mediates the ubiquitination and subsequent proteasomal degradation of target proteins. This is Ankyrin repeat and SOCS box protein 12 (ASB12) from Homo sapiens (Human).